Reading from the N-terminus, the 132-residue chain is NADH-quinone oxidoreductase subunit A 2 (132 aa).

3 helical membrane passes run 10–30, 66–86, and 93–113; these read WALLAYLFGALALCLLMLGLG, LVAMLFVIFGIEMPFLYLWAV, and WAGFVEATLFVSLLLVGLFYL.

It belongs to the complex I subunit 3 family. In terms of assembly, NDH-1 is composed of 13 different subunits. Subunits NuoA, H, J, K, L, M, N constitute the membrane sector of the complex.

Its subcellular location is the cell inner membrane. The enzyme catalyses a quinone + NADH + 5 H(+)(in) = a quinol + NAD(+) + 4 H(+)(out). NDH-1 shuttles electrons from NADH, via FMN and iron-sulfur (Fe-S) centers, to quinones in the respiratory chain. The immediate electron acceptor for the enzyme in this species is believed to be ubiquinone. Couples the redox reaction to proton translocation (for every two electrons transferred, four hydrogen ions are translocated across the cytoplasmic membrane), and thus conserves the redox energy in a proton gradient. This is NADH-quinone oxidoreductase subunit A 2 from Pseudomonas aeruginosa (strain UCBPP-PA14).